A 478-amino-acid polypeptide reads, in one-letter code: Glycogen synthase (478 aa).

Lysine 15 contacts ADP-alpha-D-glucose.

Belongs to the glycosyltransferase 1 family. Bacterial/plant glycogen synthase subfamily.

It catalyses the reaction [(1-&gt;4)-alpha-D-glucosyl](n) + ADP-alpha-D-glucose = [(1-&gt;4)-alpha-D-glucosyl](n+1) + ADP + H(+). Its pathway is glycan biosynthesis; glycogen biosynthesis. Functionally, synthesizes alpha-1,4-glucan chains using ADP-glucose. The sequence is that of Glycogen synthase from Clostridium botulinum (strain Alaska E43 / Type E3).